Here is a 1381-residue protein sequence, read N- to C-terminus: Hepatocyte growth factor receptor (1381 aa).

An N-terminal signal peptide occupies residues 1-24 (MKAPAVLAPGILLLLFTLVQRSNG). The Extracellular segment spans residues 25–932 (ECKEALTKSE…VIVQPDQNFT (908 aa)). The Sema domain occupies 27–515 (KEALTKSEMN…TGKKITKIPL (489 aa)). Residue asparagine 45 is glycosylated (N-linked (GlcNAc...) asparagine). Cystine bridges form between cysteine 95-cysteine 101, cysteine 98-cysteine 160, cysteine 133-cysteine 141, and cysteine 172-cysteine 175. Asparagine 106 carries N-linked (GlcNAc...) asparagine glycosylation. Asparagine 149 is a glycosylation site (N-linked (GlcNAc...) asparagine). Asparagine 202 carries N-linked (GlcNAc...) asparagine glycosylation. 2 cysteine pairs are disulfide-bonded: cysteine 298–cysteine 363 and cysteine 385–cysteine 397. The N-linked (GlcNAc...) asparagine glycan is linked to asparagine 399. 4 disulfide bridges follow: cysteine 520–cysteine 538, cysteine 526–cysteine 561, cysteine 529–cysteine 545, and cysteine 541–cysteine 551. 3 IPT/TIG domains span residues 563-655 (PTIY…FSYV), 657-739 (PIIT…FSYR), and 742-836 (PIVY…LIYV). An O-linked (Man) threonine glycan is attached at threonine 582. N-linked (GlcNAc...) asparagine glycosylation is found at asparagine 607 and asparagine 635. 2 O-linked (Man) threonine glycosylation sites follow: threonine 676 and threonine 761. N-linked (GlcNAc...) asparagine glycosylation is found at asparagine 785, asparagine 879, and asparagine 930. Residues 933-955 (GLIAGVVSISIALLLLLGLFLWL) form a helical membrane-spanning segment. Topologically, residues 956 to 1381 (KKRKQIKDLG…QDNPDGEVDT (426 aa)) are cytoplasmic. Serine 966 is modified (phosphoserine). Threonine 977 carries the post-translational modification Phosphothreonine. A phosphoserine mark is found at serine 990, serine 997, and serine 1000. Phosphotyrosine is present on tyrosine 1003. A Protein kinase domain is found at 1078-1345 (VHFNEVIGRG…RISAIFSTFI (268 aa)). Residues 1084–1092 (IGRGHFGCV) and lysine 1110 each bind ATP. The active-site Proton acceptor is aspartate 1204. Residues 1212–1381 (LDEKFTVKVA…QDNPDGEVDT (170 aa)) form an interaction with RANBP9 region. Residue tyrosine 1230 is modified to Phosphotyrosine. Phosphotyrosine; by autocatalysis occurs at positions 1234 and 1235. Threonine 1289 is subject to Phosphothreonine. The interaction with MUC20 stretch occupies residues 1320-1359 (WHPKAEMRPSFSELVSRISAIFSTFIGEHYVHVNATYVNV). Phosphotyrosine; by autocatalysis is present on residues tyrosine 1349 and tyrosine 1356. Phosphotyrosine is present on tyrosine 1365.

This sequence belongs to the protein kinase superfamily. Tyr protein kinase family. In terms of assembly, heterodimer made of an alpha chain (50 kDa) and a beta chain (145 kDa) which are disulfide linked. Binds PLXNB1. Interacts when phosphorylated with downstream effectors including STAT3, PIK3R1, SRC, PCLG1, GRB2 and GAB1. Interacts with SPSB1, SPSB2 and SPSB4. Interacts with INPP5D/SHIP1. When phosphorylated at Tyr-1356, interacts with INPPL1/SHIP2. Interacts with RANBP9 and RANBP10, as well as SPSB1, SPSB2, SPSB3 and SPSB4. SPSB1 binding occurs in the presence and in the absence of HGF, however HGF treatment has a positive effect on this interaction. Interacts with MUC20; prevents interaction with GRB2 and suppresses hepatocyte growth factor-induced cell proliferation. Interacts with GRB10. Interacts with PTPN1 and PTPN2. Interacts with tensin TNS3. Interacts (when phosphorylated) with tensin TNS4 (via SH2 domain); the interaction increases MET protein stability by inhibiting MET endocytosis and subsequent lysosomal degradation. Post-translationally, autophosphorylated in response to ligand binding on Tyr-1234 and Tyr-1235 in the kinase domain leading to further phosphorylation of Tyr-1349 and Tyr-1356 in the C-terminal multifunctional docking site. Dephosphorylated by PTPRJ at Tyr-1349 and Tyr-1365. Dephosphorylated by PTPN1 and PTPN2. In terms of processing, ubiquitinated. Ubiquitination by CBL regulates the receptor stability and activity through proteasomal degradation. O-mannosylation of IPT/TIG domains by TMEM260 is required for protein maturation. O-mannosylated residues are composed of single mannose glycans that are not elongated or modified.

Its subcellular location is the membrane. The catalysed reaction is L-tyrosyl-[protein] + ATP = O-phospho-L-tyrosyl-[protein] + ADP + H(+). With respect to regulation, in its inactive state, the C-terminal tail interacts with the catalytic domain and inhibits the kinase activity. Upon ligand binding, the C-terminal tail is displaced and becomes phosphorylated, thus increasing the kinase activity. Receptor tyrosine kinase that transduces signals from the extracellular matrix into the cytoplasm by binding to hepatocyte growth factor/HGF ligand. Regulates many physiological processes including proliferation, scattering, morphogenesis and survival. Ligand binding at the cell surface induces autophosphorylation of MET on its intracellular domain that provides docking sites for downstream signaling molecules. Following activation by ligand, interacts with the PI3-kinase subunit PIK3R1, PLCG1, SRC, GRB2, STAT3 or the adapter GAB1. Recruitment of these downstream effectors by MET leads to the activation of several signaling cascades including the RAS-ERK, PI3 kinase-AKT, or PLCgamma-PKC. The RAS-ERK activation is associated with the morphogenetic effects while PI3K/AKT coordinates prosurvival effects. During embryonic development, MET signaling plays a role in gastrulation, development and migration of muscles and neuronal precursors, angiogenesis and kidney formation. In adults, participates in wound healing as well as organ regeneration and tissue remodeling. Also promotes differentiation and proliferation of hematopoietic cells. This Aotus nancymaae (Ma's night monkey) protein is Hepatocyte growth factor receptor (MET).